The chain runs to 67 residues: Large ribosomal subunit protein uL30 (67 aa).

Belongs to the universal ribosomal protein uL30 family. In terms of assembly, part of the 50S ribosomal subunit.

The protein is Large ribosomal subunit protein uL30 of Thermotoga neapolitana (strain ATCC 49049 / DSM 4359 / NBRC 107923 / NS-E).